Here is a 169-residue protein sequence, read N- to C-terminus: Large ribosomal subunit protein uL5 (169 aa).

Belongs to the universal ribosomal protein uL5 family. Part of the 50S ribosomal subunit; contacts the 5S rRNA and probably tRNA. Forms a bridge to the 30S subunit in the 70S ribosome.

Functionally, this is one of the proteins that bind and probably mediate the attachment of the 5S RNA into the large ribosomal subunit, where it forms part of the central protuberance. In the 70S ribosome it contacts protein S13 of the 30S subunit (bridge B1b), connecting the 2 subunits; this bridge is implicated in subunit movement. May contact the P site tRNA; the 5S rRNA and some of its associated proteins might help stabilize positioning of ribosome-bound tRNAs. This is Large ribosomal subunit protein uL5 from Methanosarcina mazei (strain ATCC BAA-159 / DSM 3647 / Goe1 / Go1 / JCM 11833 / OCM 88) (Methanosarcina frisia).